A 358-amino-acid polypeptide reads, in one-letter code: Tetraacyldisaccharide 4'-kinase (358 aa).

Ile71–Thr78 serves as a coordination point for ATP.

This sequence belongs to the LpxK family.

It catalyses the reaction a lipid A disaccharide + ATP = a lipid IVA + ADP + H(+). It participates in glycolipid biosynthesis; lipid IV(A) biosynthesis; lipid IV(A) from (3R)-3-hydroxytetradecanoyl-[acyl-carrier-protein] and UDP-N-acetyl-alpha-D-glucosamine: step 6/6. In terms of biological role, transfers the gamma-phosphate of ATP to the 4'-position of a tetraacyldisaccharide 1-phosphate intermediate (termed DS-1-P) to form tetraacyldisaccharide 1,4'-bis-phosphate (lipid IVA). This is Tetraacyldisaccharide 4'-kinase from Methylibium petroleiphilum (strain ATCC BAA-1232 / LMG 22953 / PM1).